Reading from the N-terminus, the 177-residue chain is B-phycoerythrin beta chain (177 aa).

Phycourobilin-binding residues include Cys-50 and Cys-61. Residue Asn-72 is modified to N4-methylasparagine. (2R,3E)-phycoerythrobilin-binding residues include Cys-82 and Cys-158.

This sequence belongs to the phycobiliprotein family. In terms of assembly, heteromer of 6 alpha, 6 beta and one gamma chain. Contains two covalently linked phycoerythrobilin chromophores and one covalently linked phycourobilin chromophore.

The protein resides in the plastid. Its subcellular location is the chloroplast thylakoid membrane. Functionally, light-harvesting photosynthetic bile pigment-protein from the phycobiliprotein complex. The chain is B-phycoerythrin beta chain (cpeB) from Porphyridium purpureum (Red alga).